Reading from the N-terminus, the 251-residue chain is Pantothenate synthetase (251 aa).

Position 28-35 (28-35 (MGALHTGH)) interacts with ATP. The active-site Proton donor is histidine 35. Glutamine 59 contacts (R)-pantoate. Glutamine 59 contacts beta-alanine. 145 to 148 (GEKD) provides a ligand contact to ATP. Position 151 (glutamine 151) interacts with (R)-pantoate. Residues valine 174 and 182 to 185 (KSSR) each bind ATP.

This sequence belongs to the pantothenate synthetase family. As to quaternary structure, homodimer.

It is found in the cytoplasm. The enzyme catalyses (R)-pantoate + beta-alanine + ATP = (R)-pantothenate + AMP + diphosphate + H(+). The protein operates within cofactor biosynthesis; (R)-pantothenate biosynthesis; (R)-pantothenate from (R)-pantoate and beta-alanine: step 1/1. Functionally, catalyzes the condensation of pantoate with beta-alanine in an ATP-dependent reaction via a pantoyl-adenylate intermediate. The protein is Pantothenate synthetase of Bdellovibrio bacteriovorus (strain ATCC 15356 / DSM 50701 / NCIMB 9529 / HD100).